The primary structure comprises 255 residues: Protein YIPF7 (255 aa).

The Cytoplasmic segment spans residues 1–124 (MSNLGQFDSD…ADGSIMNETD (124 aa)). A helical transmembrane segment spans residues 125-145 (LTGPILFCMALGATLLLAGKV). Residue Q146 is a topological domain, lumenal. The helical transmembrane segment at 147-167 (FGYVYGMSAIGCLGIHALLNL) threads the bilayer. The Cytoplasmic portion of the chain corresponds to 168 to 180 (MSSSGVSYGCVAS). A helical transmembrane segment spans residues 181–201 (VLGYCLLPMVILSSCAIFFSL). Residues 202–204 (QGT) are Lumenal-facing. Residues 205–225 (FGTVSALVIIGWCSLSASKIF) form a helical membrane-spanning segment. Residues 226-234 (TSALAMEGQ) lie on the Cytoplasmic side of the membrane. The helical transmembrane segment at 235-255 (QLLIAYPCALLYGLFALVTVF) threads the bilayer.

It belongs to the YIP1 family.

The protein resides in the endoplasmic reticulum membrane. Its subcellular location is the golgi apparatus. It is found in the cis-Golgi network membrane. The protein localises to the trans-Golgi network membrane. The chain is Protein YIPF7 (YIPF7) from Bos taurus (Bovine).